The primary structure comprises 60 residues: Large ribosomal subunit protein bL32 (60 aa).

The disordered stretch occupies residues methionine 1–serine 43.

The protein belongs to the bacterial ribosomal protein bL32 family.

The chain is Large ribosomal subunit protein bL32 from Nitrosomonas europaea (strain ATCC 19718 / CIP 103999 / KCTC 2705 / NBRC 14298).